The primary structure comprises 205 residues: Holliday junction branch migration complex subunit RuvA (205 aa).

Residues 1–64 (MIGRLRGVLI…EDAQLLYGFI (64 aa)) are domain I. Positions 65 to 143 (TKKERSLFRL…SLMEASVGSE (79 aa)) are domain II. Residues 144 to 156 (REFVLQSNYSPAP) form a flexible linker region. The tract at residues 157 to 205 (TVNSAEEDAISALLSLGYKPPQASKAVSAAYKEGMDSETLIKAALKSML) is domain III.

This sequence belongs to the RuvA family. As to quaternary structure, homotetramer. Forms an RuvA(8)-RuvB(12)-Holliday junction (HJ) complex. HJ DNA is sandwiched between 2 RuvA tetramers; dsDNA enters through RuvA and exits via RuvB. An RuvB hexamer assembles on each DNA strand where it exits the tetramer. Each RuvB hexamer is contacted by two RuvA subunits (via domain III) on 2 adjacent RuvB subunits; this complex drives branch migration. In the full resolvosome a probable DNA-RuvA(4)-RuvB(12)-RuvC(2) complex forms which resolves the HJ.

It is found in the cytoplasm. In terms of biological role, the RuvA-RuvB-RuvC complex processes Holliday junction (HJ) DNA during genetic recombination and DNA repair, while the RuvA-RuvB complex plays an important role in the rescue of blocked DNA replication forks via replication fork reversal (RFR). RuvA specifically binds to HJ cruciform DNA, conferring on it an open structure. The RuvB hexamer acts as an ATP-dependent pump, pulling dsDNA into and through the RuvAB complex. HJ branch migration allows RuvC to scan DNA until it finds its consensus sequence, where it cleaves and resolves the cruciform DNA. The sequence is that of Holliday junction branch migration complex subunit RuvA from Shewanella sp. (strain MR-4).